The following is a 356-amino-acid chain: Dual-specificity RNA methyltransferase RlmN (356 aa).

Glutamate 92 serves as the catalytic Proton acceptor. The Radical SAM core domain maps to 98 to 334 (EKDRGTLCIS…MRRTRGEDID (237 aa)). The cysteines at positions 105 and 337 are disulfide-linked. [4Fe-4S] cluster-binding residues include cysteine 112, cysteine 116, and cysteine 119. S-adenosyl-L-methionine is bound by residues 162–163 (GE), serine 194, 216–218 (SLH), and asparagine 294. Residue cysteine 337 is the S-methylcysteine intermediate of the active site.

It belongs to the radical SAM superfamily. RlmN family. It depends on [4Fe-4S] cluster as a cofactor.

It localises to the cytoplasm. The enzyme catalyses adenosine(2503) in 23S rRNA + 2 reduced [2Fe-2S]-[ferredoxin] + 2 S-adenosyl-L-methionine = 2-methyladenosine(2503) in 23S rRNA + 5'-deoxyadenosine + L-methionine + 2 oxidized [2Fe-2S]-[ferredoxin] + S-adenosyl-L-homocysteine. It carries out the reaction adenosine(37) in tRNA + 2 reduced [2Fe-2S]-[ferredoxin] + 2 S-adenosyl-L-methionine = 2-methyladenosine(37) in tRNA + 5'-deoxyadenosine + L-methionine + 2 oxidized [2Fe-2S]-[ferredoxin] + S-adenosyl-L-homocysteine. Specifically methylates position 2 of adenine 2503 in 23S rRNA and position 2 of adenine 37 in tRNAs. m2A2503 modification seems to play a crucial role in the proofreading step occurring at the peptidyl transferase center and thus would serve to optimize ribosomal fidelity. This Vesicomyosocius okutanii subsp. Calyptogena okutanii (strain HA) protein is Dual-specificity RNA methyltransferase RlmN.